The following is a 177-amino-acid chain: Large ribosomal subunit protein uL6 (177 aa).

Belongs to the universal ribosomal protein uL6 family. In terms of assembly, part of the 50S ribosomal subunit.

Its function is as follows. This protein binds to the 23S rRNA, and is important in its secondary structure. It is located near the subunit interface in the base of the L7/L12 stalk, and near the tRNA binding site of the peptidyltransferase center. In Rhodospirillum centenum (strain ATCC 51521 / SW), this protein is Large ribosomal subunit protein uL6.